A 175-amino-acid polypeptide reads, in one-letter code: Ribosome maturation factor RimM (175 aa).

The PRC barrel domain occupies 96–175 (EGDYYWHDLI…TIEVDWDAGF (80 aa)).

This sequence belongs to the RimM family. In terms of assembly, binds ribosomal protein uS19.

It is found in the cytoplasm. An accessory protein needed during the final step in the assembly of 30S ribosomal subunit, possibly for assembly of the head region. Essential for efficient processing of 16S rRNA. May be needed both before and after RbfA during the maturation of 16S rRNA. It has affinity for free ribosomal 30S subunits but not for 70S ribosomes. The chain is Ribosome maturation factor RimM from Actinobacillus succinogenes (strain ATCC 55618 / DSM 22257 / CCUG 43843 / 130Z).